Consider the following 189-residue polypeptide: Dirigent protein 21 (189 aa).

The first 19 residues, 1-19 (MASLYLLLLLPLFLALILA), serve as a signal peptide directing secretion. N-linked (GlcNAc...) asparagine glycans are attached at residues Asn72 and Asn173.

The protein belongs to the plant dirigent protein family. Homodimer.

The protein localises to the secreted. Dirigent proteins impart stereoselectivity on the phenoxy radical-coupling reaction, yielding optically active lignans from two molecules of coniferyl alcohol in the biosynthesis of lignans, flavonolignans, and alkaloids and thus plays a central role in plant secondary metabolism. The protein is Dirigent protein 21 (DIR21) of Arabidopsis thaliana (Mouse-ear cress).